The following is a 500-amino-acid chain: MKSTRSGSNNWQSAVSGTSPKIATAMEAAISAGAEVSRVGRRILQRIWDPEPTNDRSNNEPVWCLGCSYLLDTKEYGTPPTLTTSTPPADATLTAIVPEPGAGVESEPRRATEKAGVPVNTSNAKAVAPIPVAASGQHQLQVPETPPLSVASSFDSALAYEEPGQDGGWPPAFLDDFESRIWMTYRTGFEVIPRSTDPKAAAALSFTMRFKTSFGDQTGFSSDTGWGCMIRSGQSLLANAMLISRAGRAWRRTTNPDIEREIVCLFADDPRAPYSIQNFVNHGAAACGKYPGEWFGPSATARCIHSLRVYLTRDLPEVYEDNFMSTANPDGNHFHPTLILVSTRLGIDKINPIYHEALISTLQLPQAIGIAGGRPSSSHYFIGAQGQWLFYLDPHHPRPALPYRENPNDYTIEELDSCHTRRLRHLHVEDMDPSMLIGFLIKDEDDWDLWKSSVKHVQGKAIINVSPHDPEHGMGFGRAGAIDEVETLSDEDDTDTVLDL.

Cys-228 functions as the Nucleophile in the catalytic mechanism. Residues Asp-393 and His-395 contribute to the active site.

The protein belongs to the peptidase C54 family.

The protein resides in the cytoplasm. It localises to the nucleus. It is found in the preautophagosomal structure. It catalyses the reaction [protein]-C-terminal L-amino acid-glycyl-phosphatidylethanolamide + H2O = [protein]-C-terminal L-amino acid-glycine + a 1,2-diacyl-sn-glycero-3-phosphoethanolamine. Its function is as follows. Cysteine protease that plays a key role in cytoplasm to vacuole transport (Cvt) and autophagy by mediating both proteolytic activation and delipidation of ATG8. Required for selective autophagic degradation of the nucleus (nucleophagy) as well as for mitophagy which contributes to regulate mitochondrial quantity and quality by eliminating the mitochondria to a basal level to fulfill cellular energy requirements and preventing excess ROS production. The protease activity is required for proteolytic activation of ATG8: cleaves the C-terminal amino acid of ATG8 to reveal a C-terminal glycine. ATG8 ubiquitin-like activity requires the exposure of the glycine at the C-terminus for its conjugation to phosphatidylethanolamine (PE) and its insertion to membranes, which is necessary for autophagy. The ATG8-PE conjugate mediates tethering between adjacent membranes and stimulates membrane hemifusion, leading to expansion of the autophagosomal membrane during autophagy. In addition to the protease activity, also catalyzes deconjugation of PE-conjugated forms of ATG8 during macroautophagy: ATG8 delipidation is required to release the protein from membranes, which facilitates multiple events during macroautophagy, and especially for efficient autophagosome biogenesis, the assembly of ATG9-containing tubulovesicular clusters into phagophores/autophagosomes, and for the disassembly of PAS-associated ATG components. ATG8 delipidation by ATG4 also recycles ATG8-PE generated on inappropriate membranes to maintain a reservoir of unlipidated ATG8 that is required for autophagosome formation at the PAS. This chain is Probable cysteine protease ATG4 (ATG4), found in Podospora anserina (Pleurage anserina).